Consider the following 278-residue polypeptide: Probable ribosomal RNA small subunit methyltransferase A (278 aa).

6 residues coordinate S-adenosyl-L-methionine: His-25, Met-27, Gly-52, Glu-73, Asp-98, and Asn-114.

Belongs to the class I-like SAM-binding methyltransferase superfamily. rRNA adenine N(6)-methyltransferase family. RsmA subfamily.

It localises to the cytoplasm. Functionally, specifically dimethylates two adjacent adenosines in the loop of a conserved hairpin near the 3'-end of 16S rRNA in the 30S particle. May play a critical role in biogenesis of 30S subunits. This is Probable ribosomal RNA small subunit methyltransferase A from Methanopyrus kandleri (strain AV19 / DSM 6324 / JCM 9639 / NBRC 100938).